We begin with the raw amino-acid sequence, 1060 residues long: Carbamoyl phosphate synthase large chain (1060 aa).

Positions 1–401 (MPKRQDIHKI…SLLKAVRSLE (401 aa)) are carboxyphosphate synthetic domain. ATP contacts are provided by Arg129, Arg169, Gly175, Gly176, Arg208, Ile210, Glu215, Gly241, Val242, His243, Gln284, and Glu298. Residues 133–327 (KNLMQKLHEP…IAKMAAKIAV (195 aa)) enclose the ATP-grasp 1 domain. Mg(2+)-binding residues include Gln284, Glu298, and Asn300. Mn(2+)-binding residues include Gln284, Glu298, and Asn300. An oligomerization domain region spans residues 402–546 (VGLIHPERPA…YSTYESSTES (145 aa)). The segment at 547-929 (VKSDKPSVLV…ALYKAFEAAG (383 aa)) is carbamoyl phosphate synthetic domain. The ATP-grasp 2 domain maps to 671-861 (DQVIKSLKLP…LAQVATLAIL (191 aa)). Positions 707, 746, 748, 752, 777, 778, 779, 780, 820, and 832 each coordinate ATP. Positions 820, 832, and 834 each coordinate Mg(2+). Gln820, Glu832, and Asn834 together coordinate Mn(2+). The MGS-like domain maps to 930 to 1060 (MHLPQFGRAL…QAFSISPIKS (131 aa)). The allosteric domain stretch occupies residues 930 to 1060 (MHLPQFGRAL…QAFSISPIKS (131 aa)).

Belongs to the CarB family. As to quaternary structure, composed of two chains; the small (or glutamine) chain promotes the hydrolysis of glutamine to ammonia, which is used by the large (or ammonia) chain to synthesize carbamoyl phosphate. Tetramer of heterodimers (alpha,beta)4. Mg(2+) serves as cofactor. It depends on Mn(2+) as a cofactor.

The catalysed reaction is hydrogencarbonate + L-glutamine + 2 ATP + H2O = carbamoyl phosphate + L-glutamate + 2 ADP + phosphate + 2 H(+). It carries out the reaction hydrogencarbonate + NH4(+) + 2 ATP = carbamoyl phosphate + 2 ADP + phosphate + 2 H(+). It functions in the pathway amino-acid biosynthesis; L-arginine biosynthesis; carbamoyl phosphate from bicarbonate: step 1/1. Its pathway is pyrimidine metabolism; UMP biosynthesis via de novo pathway; (S)-dihydroorotate from bicarbonate: step 1/3. Its function is as follows. Large subunit of the glutamine-dependent carbamoyl phosphate synthetase (CPSase). CPSase catalyzes the formation of carbamoyl phosphate from the ammonia moiety of glutamine, carbonate, and phosphate donated by ATP, constituting the first step of 2 biosynthetic pathways, one leading to arginine and/or urea and the other to pyrimidine nucleotides. The large subunit (synthetase) binds the substrates ammonia (free or transferred from glutamine from the small subunit), hydrogencarbonate and ATP and carries out an ATP-coupled ligase reaction, activating hydrogencarbonate by forming carboxy phosphate which reacts with ammonia to form carbamoyl phosphate. The sequence is that of Carbamoyl phosphate synthase large chain from Lacticaseibacillus paracasei (strain ATCC 334 / BCRC 17002 / CCUG 31169 / CIP 107868 / KCTC 3260 / NRRL B-441) (Lactobacillus paracasei).